The sequence spans 470 residues: Flotillin-like protein 1 (470 aa).

The S-palmitoyl cysteine moiety is linked to residue cysteine 35. Residues 305-354 (EYETKVQEANWELYNKQKQAEAVLYEKQKQAEAQKAQADAAFYSKQKEAE) adopt a coiled-coil conformation.

It belongs to the band 7/mec-2 family. Flotillin subfamily. In terms of processing, may be palmitoylated.

The protein localises to the cell membrane. Its subcellular location is the membrane. It is found in the caveola. Functionally, may act as a scaffolding protein within caveolar membranes, functionally participating in formation of caveolae or caveolae-like vesicles. This Arabidopsis thaliana (Mouse-ear cress) protein is Flotillin-like protein 1 (FLOT1).